The sequence spans 159 residues: NADH-quinone oxidoreductase subunit I (159 aa).

2 consecutive 4Fe-4S ferredoxin-type domains span residues 50-80 (QRRY…IESE) and 90-119 (KRYD…ETHI). 8 residues coordinate [4Fe-4S] cluster: C60, C63, C66, C70, C99, C102, C105, and C109.

This sequence belongs to the complex I 23 kDa subunit family. In terms of assembly, NDH-1 is composed of 14 different subunits. Subunits NuoA, H, J, K, L, M, N constitute the membrane sector of the complex. The cofactor is [4Fe-4S] cluster.

The protein localises to the cell inner membrane. The enzyme catalyses a quinone + NADH + 5 H(+)(in) = a quinol + NAD(+) + 4 H(+)(out). Its function is as follows. NDH-1 shuttles electrons from NADH, via FMN and iron-sulfur (Fe-S) centers, to quinones in the respiratory chain. The immediate electron acceptor for the enzyme in this species is believed to be ubiquinone. Couples the redox reaction to proton translocation (for every two electrons transferred, four hydrogen ions are translocated across the cytoplasmic membrane), and thus conserves the redox energy in a proton gradient. This Neisseria meningitidis serogroup A / serotype 4A (strain DSM 15465 / Z2491) protein is NADH-quinone oxidoreductase subunit I.